We begin with the raw amino-acid sequence, 662 residues long: Probable protein phosphatase CG10417 (662 aa).

A PPM-type phosphatase domain is found at 23–564 (AVGASSMQGW…DNMTAVIVQF (542 aa)). Mn(2+) contacts are provided by D57 and G58. 2 disordered regions span residues 219 to 275 (DGVA…FKHT) and 288 to 374 (GSND…DEDQ). Polar residues-rich tracts occupy residues 238 to 252 (DSNT…STKN), 261 to 275 (NDQN…FKHT), and 288 to 319 (GSND…INSS). Residues S289 and S306 each carry the phosphoserine modification. Acidic residues predominate over residues 320–334 (QDDEFTDDDADYEEN). A compositionally biased stretch (polar residues) spans 337–347 (VKSPDTSSAES). Positions 349 to 374 (DCTENDDDGDEDGNEDSDEEETDEDQ) are enriched in acidic residues. The Mn(2+) site is built by D506 and D555. Over residues 591 to 609 (VSHSLNDQSASKRCASQNA) the composition is skewed to polar residues. Positions 591 to 662 (VSHSLNDQSA…KEVTIIVSSS (72 aa)) are disordered. S592, S594, and S599 each carry phosphoserine. Residues 616–637 (LEKNNSKRLKTDLEQENIKDRT) show a composition bias toward basic and acidic residues. A Phosphothreonine modification is found at T637. S639 and S641 each carry phosphoserine.

Belongs to the PP2C family. Requires Mg(2+) as cofactor. The cofactor is Mn(2+).

The enzyme catalyses O-phospho-L-seryl-[protein] + H2O = L-seryl-[protein] + phosphate. It catalyses the reaction O-phospho-L-threonyl-[protein] + H2O = L-threonyl-[protein] + phosphate. This Drosophila melanogaster (Fruit fly) protein is Probable protein phosphatase CG10417.